Here is a 218-residue protein sequence, read N- to C-terminus: Ribonuclease T (218 aa).

The Exonuclease domain occupies 22–196 (VVVDVETAGF…YDAMKTAELF (175 aa)). Mg(2+)-binding residues include Asp-25, Glu-27, His-183, and Asp-188. His-183 functions as the Proton donor/acceptor in the catalytic mechanism.

It belongs to the RNase T family. As to quaternary structure, homodimer. Mg(2+) is required as a cofactor.

Functionally, trims short 3' overhangs of a variety of RNA species, leaving a one or two nucleotide 3' overhang. Responsible for the end-turnover of tRNA: specifically removes the terminal AMP residue from uncharged tRNA (tRNA-C-C-A). Also appears to be involved in tRNA biosynthesis. This Hahella chejuensis (strain KCTC 2396) protein is Ribonuclease T.